The chain runs to 476 residues: Cysteine--tRNA ligase (476 aa).

Position 36 (cysteine 36) interacts with Zn(2+). A 'HIGH' region motif is present at residues 38-48 (PTVYDYAHIGN). 3 residues coordinate Zn(2+): cysteine 221, histidine 246, and glutamate 250. The short motif at 278–282 (KMSKS) is the 'KMSKS' region element. Lysine 281 serves as a coordination point for ATP.

The protein belongs to the class-I aminoacyl-tRNA synthetase family. In terms of assembly, monomer. Zn(2+) is required as a cofactor.

The protein resides in the cytoplasm. It carries out the reaction tRNA(Cys) + L-cysteine + ATP = L-cysteinyl-tRNA(Cys) + AMP + diphosphate. This Chlamydia caviae (strain ATCC VR-813 / DSM 19441 / 03DC25 / GPIC) (Chlamydophila caviae) protein is Cysteine--tRNA ligase.